The sequence spans 90 residues: Small ribosomal subunit protein bS6 (90 aa).

K33 is covalently cross-linked (Isoglutamyl lysine isopeptide (Lys-Gln) (interchain with Q-Cter in protein Pup)).

It belongs to the bacterial ribosomal protein bS6 family.

Functionally, binds together with bS18 to 16S ribosomal RNA. This Mycolicibacterium smegmatis (strain ATCC 700084 / mc(2)155) (Mycobacterium smegmatis) protein is Small ribosomal subunit protein bS6 (rpsF).